A 182-amino-acid chain; its full sequence is NADH-quinone oxidoreductase subunit 9 (182 aa).

2 4Fe-4S ferredoxin-type domains span residues 43–73 (LTRH…VEPA) and 89–118 (KVYE…LGYD). Cysteine 53, cysteine 56, serine 57, cysteine 59, cysteine 63, cysteine 98, isoleucine 99, cysteine 101, cysteine 104, and cysteine 108 together coordinate [4Fe-4S] cluster.

The protein belongs to the complex I 23 kDa subunit family. In terms of assembly, NDH-1 is composed of 15 different subunits, Nqo1 to Nqo15. The complex has a L-shaped structure, with the hydrophobic arm (subunits Nqo7, Nqo8 and Nqo10 to Nqo14) embedded in the membrane and the hydrophilic peripheral arm (subunits Nqo1 to Nqo6, Nqo9 and Nqo15) protruding into the bacterial cytoplasm. The hydrophilic domain contains all the redox centers. The cofactor is [4Fe-4S] cluster.

Its subcellular location is the cell membrane. The enzyme catalyses a quinone + NADH + 5 H(+)(in) = a quinol + NAD(+) + 4 H(+)(out). NDH-1 shuttles electrons from NADH, via FMN and iron-sulfur (Fe-S) centers, to quinones in the respiratory chain. The immediate electron acceptor for the enzyme in this species is menaquinone. Couples the redox reaction to proton translocation (for every two electrons transferred, four hydrogen ions are translocated across the cytoplasmic membrane), and thus conserves the redox energy in a proton gradient required for the synthesis of ATP. The role of the Nqo9 subunit appears to provide a 'connecting chain' of two clusters between cluster N5 and the terminal cluster N2, and to stabilize the structure of the complex by interacting with other subunits. This Thermus thermophilus (strain ATCC 27634 / DSM 579 / HB8) protein is NADH-quinone oxidoreductase subunit 9 (nqo9).